We begin with the raw amino-acid sequence, 182 residues long: MIRATIILAAVAALAFSAPVPEVPENYDDIPAEYKSLIPAEVSEHLKSITPEEKAILKEVAKGYKDFKSEDDFLNALKEKSPTLHEKASKLHQIVKDKVNALNDEAKAFVKKAIAEGRKIHAQYLAGEKPSLDTLKTTAKTHIEAYKGLSQDAKDSIAKEFPILTGFFKNEKVQAMVGQYLN.

The signal sequence occupies residues 1–17 (MIRATIILAAVAALAFS). Residues 86–106 (EKASKLHQIVKDKVNALNDEA) adopt a coiled-coil conformation.

Belongs to the fatty-acid and retinol-binding protein (FARBP) family.

The protein resides in the secreted. Probably binds lipids. The chain is Fatty-acid and retinol-binding protein 1 (far-1) from Caenorhabditis elegans.